A 544-amino-acid polypeptide reads, in one-letter code: Chaperonin GroEL 2 (544 aa).

ATP-binding positions include 29 to 32 (TLGP), 86 to 90 (DGTTT), Gly413, 479 to 481 (NAA), and Asp495.

This sequence belongs to the chaperonin (HSP60) family. Forms a cylinder of 14 subunits composed of two heptameric rings stacked back-to-back. Interacts with the co-chaperonin GroES.

The protein resides in the cytoplasm. The enzyme catalyses ATP + H2O + a folded polypeptide = ADP + phosphate + an unfolded polypeptide.. Its function is as follows. Together with its co-chaperonin GroES, plays an essential role in assisting protein folding. The GroEL-GroES system forms a nano-cage that allows encapsulation of the non-native substrate proteins and provides a physical environment optimized to promote and accelerate protein folding. The sequence is that of Chaperonin GroEL 2 from Synechococcus sp. (strain WH7803).